We begin with the raw amino-acid sequence, 557 residues long: Estrogen receptor beta (557 aa).

The segment at 1-154 (MMAAASSPEK…SSGGKADLHY (154 aa)) is modulating. 2 consecutive NR C4-type zinc fingers follow at residues 155-175 (CAVC…CEGC) and 191-215 (CPAT…LRKC). Positions 155–220 (CAVCHDYASG…RLRKCYEVGM (66 aa)) form a DNA-binding region, nuclear receptor. The tract at residues 240–268 (LTRLSSQGKTAEPKGITGPAEGSLNKPEK) is disordered. The region spanning 272–508 (TPEQLIERIL…DLLLEMLDAH (237 aa)) is the NR LBD domain. The tract at residues 513–557 (SCLPHQPPQQDSKDQSEVPAPLHSSAGGPSNTWTPSSARAGGESQ) is disordered. Residues 539 to 557 (GGPSNTWTPSSARAGGESQ) show a composition bias toward polar residues.

Belongs to the nuclear hormone receptor family. NR3 subfamily. Binds DNA as a homodimer. Can form a heterodimer with ER-alpha.

The protein resides in the nucleus. Binds estrogens with an affinity similar to that of ER-alpha, and activates expression of reporter genes containing estrogen response elements (ERE) in an estrogen-dependent manner. The chain is Estrogen receptor beta (esr2) from Oreochromis niloticus (Nile tilapia).